We begin with the raw amino-acid sequence, 832 residues long: Prickle-like protein 1-B (832 aa).

The 109-residue stretch at 14–122 folds into the PET domain; that stretch reads FGCQRSSTSD…NIKMLSRAVM (109 aa). LIM zinc-binding domains follow at residues 124–188, 189–249, and 250–313; these read AMCE…ELLK, PRCS…HYAE, and YCES…EDVH. Disordered stretches follow at residues 312-346, 428-455, 602-701, and 766-832; these read VHASDSSDSAFQSARSRESRRSVRMGKSSRSADQC, QQPSEDNRSTEHWMSENIKGKNDLQRNN, ICQE…KERN, and CSSS…CIIS. Composition is skewed to basic and acidic residues over residues 432–453 and 603–614; these read EDNRSTEHWMSENIKGKNDLQR and CQEKPPPEEKPM. 2 stretches are compositionally biased toward basic residues: residues 669-680 and 816-832; these read RPHHHRRRKSRK and TKSKKKKGHKGKNCIIS. Cysteine methyl ester is present on cysteine 829. Cysteine 829 carries the S-farnesyl cysteine lipid modification. Positions 830-832 are cleaved as a propeptide — removed in mature form; it reads IIS.

It belongs to the prickle / espinas / testin family. As to quaternary structure, interacts with dvl2/dsh and mapk8/jnk1. Expressed in the dorsal marginal zone of early gastrulae (stage 10). As gastrulation proceeds, expression expands to include the lateral and ventral marginal zones, excluding the few rows of cells above the blastopore lip. Expression moves dorsally with gastrulation cell movements, and by the end of gastrulation expression is seen in dorsal mesoderm and posterior but not anterior neural ectoderm. Expression becomes down-regulated in mesoderm but remains strong in posterior ectoderm through the neurula stages. During tailbud stages, expressed in the pronephric duct, tailbud, tailtip and forming somites. In the most posterior regions, expressed in notochord and in the floorplate of the neural tube with weak expression in the roofplate. At stage 30, expressed in a complex pattern in the head including strong expression in the lens and otic vesicle.

It is found in the cell membrane. In terms of biological role, acts in a planar cell polarity (PCP) complex; polarization along the apical/basal axis of epithelial cells. Regulates the polarized assembly of fibronectrin on the surface of the mesoderm during gastrulation. Essential for gastrulation cell movements, cooperating with dvl2/dsh to activate jnk. Acts together with tes to control axial elongation. This is Prickle-like protein 1-B (prickle1-b) from Xenopus laevis (African clawed frog).